Consider the following 239-residue polypeptide: Octanoyltransferase (239 aa).

In terms of domain architecture, BPL/LPL catalytic spans 48 to 236; that stretch reads DGGDELVWLV…AFEAVFGETT (189 aa). Residues 87-94, 167-169, and 180-182 contribute to the substrate site; these read RGGEYTYH, ALG, and GLS. Cysteine 198 serves as the catalytic Acyl-thioester intermediate.

It belongs to the LipB family.

The protein resides in the cytoplasm. It carries out the reaction octanoyl-[ACP] + L-lysyl-[protein] = N(6)-octanoyl-L-lysyl-[protein] + holo-[ACP] + H(+). It functions in the pathway protein modification; protein lipoylation via endogenous pathway; protein N(6)-(lipoyl)lysine from octanoyl-[acyl-carrier-protein]: step 1/2. Its function is as follows. Catalyzes the transfer of endogenously produced octanoic acid from octanoyl-acyl-carrier-protein onto the lipoyl domains of lipoate-dependent enzymes. Lipoyl-ACP can also act as a substrate although octanoyl-ACP is likely to be the physiological substrate. This is Octanoyltransferase from Rhizobium johnstonii (strain DSM 114642 / LMG 32736 / 3841) (Rhizobium leguminosarum bv. viciae).